A 491-amino-acid polypeptide reads, in one-letter code: Nicotinamide phosphoribosyltransferase (491 aa).

Position 1 is an N-acetylmethionine (M1). At Y188 the chain carries Phosphotyrosine. R196 lines the diphosphate pocket. D219 is a binding site for beta-nicotinamide D-ribonucleotide. Diphosphate-binding residues include H247 and R311. Residues 311-313 (RPD), 353-354 (GD), G384, and R392 contribute to the beta-nicotinamide D-ribonucleotide site. S472 is modified (phosphoserine).

It belongs to the NAPRTase family. In terms of assembly, homodimer.

The protein localises to the nucleus. It localises to the cytoplasm. It is found in the secreted. It catalyses the reaction beta-nicotinamide D-ribonucleotide + diphosphate = 5-phospho-alpha-D-ribose 1-diphosphate + nicotinamide + H(+). It functions in the pathway cofactor biosynthesis; NAD(+) biosynthesis; nicotinamide D-ribonucleotide from 5-phospho-alpha-D-ribose 1-diphosphate and nicotinamide: step 1/1. Its function is as follows. Catalyzes the condensation of nicotinamide with 5-phosphoribosyl-1-pyrophosphate to yield nicotinamide mononucleotide, an intermediate in the biosynthesis of NAD. It is the rate limiting component in the mammalian NAD biosynthesis pathway. The secreted form behaves both as a cytokine with immunomodulating properties and an adipokine with anti-diabetic properties, it has no enzymatic activity, partly because of lack of activation by ATP, which has a low level in extracellular space and plasma. Plays a role in the modulation of circadian clock function. Plays a role in the modulation of circadian clock function. NAMPT-dependent oscillatory production of NAD regulates oscillation of clock target gene expression by releasing the core clock component: CLOCK-BMAL1 heterodimer from NAD-dependent SIRT1-mediated suppression. The polypeptide is Nicotinamide phosphoribosyltransferase (NAMPT) (Sus scrofa (Pig)).